The following is a 432-amino-acid chain: Serine--tRNA ligase (432 aa).

L-serine is bound at residue 238-240; that stretch reads TAE. 269–271 is a binding site for ATP; sequence RSE. Residue glutamate 292 coordinates L-serine. 357 to 360 contacts ATP; sequence EISS. Serine 393 contacts L-serine.

It belongs to the class-II aminoacyl-tRNA synthetase family. Type-1 seryl-tRNA synthetase subfamily. Homodimer. The tRNA molecule binds across the dimer.

The protein localises to the cytoplasm. It catalyses the reaction tRNA(Ser) + L-serine + ATP = L-seryl-tRNA(Ser) + AMP + diphosphate + H(+). The catalysed reaction is tRNA(Sec) + L-serine + ATP = L-seryl-tRNA(Sec) + AMP + diphosphate + H(+). It functions in the pathway aminoacyl-tRNA biosynthesis; selenocysteinyl-tRNA(Sec) biosynthesis; L-seryl-tRNA(Sec) from L-serine and tRNA(Sec): step 1/1. In terms of biological role, catalyzes the attachment of serine to tRNA(Ser). Is also able to aminoacylate tRNA(Sec) with serine, to form the misacylated tRNA L-seryl-tRNA(Sec), which will be further converted into selenocysteinyl-tRNA(Sec). The protein is Serine--tRNA ligase of Hyphomonas neptunium (strain ATCC 15444).